We begin with the raw amino-acid sequence, 92 residues long: Small ribosomal subunit protein uS19c (92 aa).

It belongs to the universal ribosomal protein uS19 family.

The protein resides in the plastid. It localises to the chloroplast. In terms of biological role, protein S19 forms a complex with S13 that binds strongly to the 16S ribosomal RNA. The chain is Small ribosomal subunit protein uS19c from Cyanidium caldarium (Red alga).